Consider the following 733-residue polypeptide: Phosphoribosylformylglycinamidine synthase subunit PurL (733 aa).

His-44 is a catalytic residue. Residues Tyr-47 and Lys-86 each contribute to the ATP site. Glu-88 contacts Mg(2+). Substrate contacts are provided by residues Ser-89 to His-92 and Arg-111. The active-site Proton acceptor is His-90. Asp-112 provides a ligand contact to Mg(2+). Residue Gln-233 participates in substrate binding. Asp-261 contacts Mg(2+). Substrate is bound at residue Glu-305–Gln-307. The ATP site is built by Asp-492 and Gly-529. Residue Asn-530 participates in Mg(2+) binding. Ser-532 contacts substrate.

It belongs to the FGAMS family. In terms of assembly, monomer. Part of the FGAM synthase complex composed of 1 PurL, 1 PurQ and 2 PurS subunits.

It localises to the cytoplasm. The catalysed reaction is N(2)-formyl-N(1)-(5-phospho-beta-D-ribosyl)glycinamide + L-glutamine + ATP + H2O = 2-formamido-N(1)-(5-O-phospho-beta-D-ribosyl)acetamidine + L-glutamate + ADP + phosphate + H(+). Its pathway is purine metabolism; IMP biosynthesis via de novo pathway; 5-amino-1-(5-phospho-D-ribosyl)imidazole from N(2)-formyl-N(1)-(5-phospho-D-ribosyl)glycinamide: step 1/2. Its function is as follows. Part of the phosphoribosylformylglycinamidine synthase complex involved in the purines biosynthetic pathway. Catalyzes the ATP-dependent conversion of formylglycinamide ribonucleotide (FGAR) and glutamine to yield formylglycinamidine ribonucleotide (FGAM) and glutamate. The FGAM synthase complex is composed of three subunits. PurQ produces an ammonia molecule by converting glutamine to glutamate. PurL transfers the ammonia molecule to FGAR to form FGAM in an ATP-dependent manner. PurS interacts with PurQ and PurL and is thought to assist in the transfer of the ammonia molecule from PurQ to PurL. The polypeptide is Phosphoribosylformylglycinamidine synthase subunit PurL (Thermomicrobium roseum (strain ATCC 27502 / DSM 5159 / P-2)).